Consider the following 198-residue polypeptide: Sensory transduction protein RegX3 (198 aa).

The Response regulatory domain occupies 1-87; that stretch reads MVTDGPAALA…ELIARIRAVL (87 aa). Asp-23 is modified (4-aspartylphosphate). Positions 99–198 form a DNA-binding region, ompR/PhoB-type; the sequence is DGVLESGPLR…VRGLGYKLES (100 aa).

In terms of processing, phosphorylated by SenX3.

Functionally, member of the two-component regulatory system SenX3/RegX3. This Mycobacterium leprae (strain TN) protein is Sensory transduction protein RegX3 (rgx3).